The sequence spans 153 residues: Ribosome maturation factor RimP (153 aa).

Belongs to the RimP family.

The protein localises to the cytoplasm. Required for maturation of 30S ribosomal subunits. The chain is Ribosome maturation factor RimP from Chromohalobacter salexigens (strain ATCC BAA-138 / DSM 3043 / CIP 106854 / NCIMB 13768 / 1H11).